The primary structure comprises 232 residues: 6-phosphogluconolactonase (232 aa).

This sequence belongs to the glucosamine/galactosamine-6-phosphate isomerase family. 6-phosphogluconolactonase subfamily.

The enzyme catalyses 6-phospho-D-glucono-1,5-lactone + H2O = 6-phospho-D-gluconate + H(+). It participates in carbohydrate degradation; pentose phosphate pathway; D-ribulose 5-phosphate from D-glucose 6-phosphate (oxidative stage): step 2/3. Hydrolysis of 6-phosphogluconolactone to 6-phosphogluconate. This Haemophilus influenzae (strain ATCC 51907 / DSM 11121 / KW20 / Rd) protein is 6-phosphogluconolactonase (pgl).